A 529-amino-acid polypeptide reads, in one-letter code: tRNA pseudouridine synthase Pus10 (529 aa).

Residues Cys-21 and Cys-24 each contribute to the Zn(2+) site. Residues 42–89 (KELLNELQKFLETEKDELILEVMNPPPKKIRLQELEDSIDNLSQNGEG) adopt a coiled-coil conformation. 2 positions are modified to phosphoserine: Ser-79 and Ser-84. Residues Cys-109 and Cys-112 each coordinate Zn(2+). An RNA binding forefinger loop region spans residues 304 to 317 (TPWIIDGERKLESS). Asp-344 (nucleophile) is an active-site residue. The tract at residues 442 to 457 (QKTPLRVLHRRPLAVR) is RNA binding thumb loop.

Belongs to the pseudouridine synthase Pus10 family. As to quaternary structure, interacts with components of the microprocessor complex DROSHA and DGCR8. In terms of processing, proteolytically cleaved during TRAIL-induced cell death. Cleaved, in vitro, either by caspase-3 (CASP3) or caspase-8 (CASP8).

It is found in the nucleus. The protein resides in the cytoplasm. The protein localises to the mitochondrion. The enzyme catalyses uridine(55) in tRNA = pseudouridine(55) in tRNA. It catalyses the reaction uridine(54) in tRNA = pseudouridine(54) in tRNA. In terms of biological role, protein with different functions depending on its subcellular location: involved in miRNA processing in the nucleus and acts as a tRNA pseudouridylate synthase in the cytoplasm. In the cytoplasm, acts as a pseudouridylate synthase by catalyzing synthesis of pseudouridine(54) and pseudouridine(55) from uracil-54 and uracil-55, respectively, in the psi GC loop of a subset of tRNAs. tRNA pseudouridylate synthase activity is enhanced by the presence of 1-methyladenosine at position 53-61 of tRNAs. Does not show tRNA pseudouridylate synthase activity in the nucleus. In the nucleus, promotes primary microRNAs (pri-miRNAs) processing independently of its RNA pseudouridylate synthase activity. Binds pri-miRNAs. Modulator of TRAIL/TNFSF10-induced cell death via activation of procaspase-8 and BID cleavage. Required for the progression of the apoptotic signal through intrinsic mitochondrial cell death. This Homo sapiens (Human) protein is tRNA pseudouridine synthase Pus10.